Reading from the N-terminus, the 300-residue chain is GTPase Era (300 aa).

The 168-residue stretch at 6-173 (HSGFVAILGR…IESLVNTLPE (168 aa)) folds into the Era-type G domain. The interval 14–21 (GRPNVGKS) is G1. A GTP-binding site is contributed by 14-21 (GRPNVGKS). A G2 region spans residues 40–44 (QTTRN). The interval 61–64 (DTPG) is G3. Residues 61–65 (DTPGI) and 123–126 (NKID) each bind GTP. Residues 123 to 126 (NKID) form a G4 region. Residues 152–154 (ISA) are G5. Positions 204–281 (TREEVPHSVA…YLELWVKVQP (78 aa)) constitute a KH type-2 domain.

This sequence belongs to the TRAFAC class TrmE-Era-EngA-EngB-Septin-like GTPase superfamily. Era GTPase family. Monomer.

The protein resides in the cytoplasm. It localises to the cell membrane. In terms of biological role, an essential GTPase that binds both GDP and GTP, with rapid nucleotide exchange. Plays a role in 16S rRNA processing and 30S ribosomal subunit biogenesis and possibly also in cell cycle regulation and energy metabolism. This is GTPase Era from Ligilactobacillus salivarius (strain UCC118) (Lactobacillus salivarius).